The chain runs to 447 residues: Probable aspartic protease At2g35615 (447 aa).

Positions 1–20 (MATQILLCFFLFFSVTLSSS) are cleaved as a signal peptide. N-linked (GlcNAc...) asparagine glycosylation is present at Asn25. The Peptidase A1 domain maps to 85–439 (FFMSITIGTP…DLETRTVSFQ (355 aa)). Asp103 is an active-site residue. The N-linked (GlcNAc...) asparagine glycan is linked to Asn251. Asp326 is a catalytic residue.

This sequence belongs to the peptidase A1 family.

It localises to the secreted. The protein is Probable aspartic protease At2g35615 of Arabidopsis thaliana (Mouse-ear cress).